A 217-amino-acid chain; its full sequence is MSSFSESAILVRDALVARGLETPMKENGISREEKKERIEEHMREILSLLTLDLSDDSLEETPHRIAKMYVDEIFSGLDYANFPKITVIENKMNCDEMVRVNDITLTSTCEHHLVTIDGKATVAYIPREKIIGLSKINRIVRFFAQRPQVQERMTQQILVALQTLLGSDDVAITMEATHYCVKSRGVMDATSSTTTTALGGIFKRNPATRHEFLSGIR.

Residues Cys-109, His-112, and Cys-180 each contribute to the Zn(2+) site.

The protein belongs to the GTP cyclohydrolase I family. Homomer.

The catalysed reaction is GTP + H2O = 7,8-dihydroneopterin 3'-triphosphate + formate + H(+). The protein operates within cofactor biosynthesis; 7,8-dihydroneopterin triphosphate biosynthesis; 7,8-dihydroneopterin triphosphate from GTP: step 1/1. In Aliivibrio salmonicida (strain LFI1238) (Vibrio salmonicida (strain LFI1238)), this protein is GTP cyclohydrolase 1.